Reading from the N-terminus, the 1067-residue chain is Receptor-type guanylate cyclase gcy-10 (1067 aa).

Residues 1–20 (MLKSLLIIVIVFLHRELCDG) form the signal peptide. Residues 21–438 (IQLILFDNWP…CVAKSSCVNY (418 aa)) lie on the Extracellular side of the membrane. An N-linked (GlcNAc...) asparagine glycan is attached at asparagine 411. Residues 439–459 (IPHIIAAVVIVTIIVIAIVII) form a helical membrane-spanning segment. Residues 460–1067 (VKQRRHKLNI…RGSIVPLQKA (608 aa)) lie on the Cytoplasmic side of the membrane. The Protein kinase domain maps to 509-791 (ALTSRRRVFG…ESISTVYPLS (283 aa)). Residues 515-523 (RVFGSYALV) and lysine 534 contribute to the ATP site. Residues 859-989 (TVMFVQICDF…DTVNFASRMQ (131 aa)) form the Guanylate cyclase domain.

This sequence belongs to the adenylyl cyclase class-4/guanylyl cyclase family. As to expression, expressed predominantly in AWC but also in AWB, ASI, ASJ and ASK sensory neurons and in I1 interneuron.

The protein resides in the cell membrane. Its subcellular location is the cell projection. It localises to the cilium. It carries out the reaction GTP = 3',5'-cyclic GMP + diphosphate. Its function is as follows. Guanylate cyclase involved in the production of the second messenger cGMP. Regulates chemotaxis responses toward volatile odorants in AWC sensory neurons and their avoidance in AWB sensory neurons. May be involved in sensitivity to quinine by regulating egl-4 activity through the production of cGMP. Involved in phototransduction in ASJ neurons downstream of G protein coupled-photoreceptor lite-1. Required to maintain the expression of putative olfactory receptor str-2 in AWC neurons in adults. In AWB and AWC sensory neurons, mediates the recognition of food oders which subsequently allows for the detection of preferred food sources. Involved in AWB sensory neuron development and extension during postembryonic development, potentially via mediating localization of tub-1 and PI(4,5)P2 to membrane cilia. This chain is Receptor-type guanylate cyclase gcy-10, found in Caenorhabditis elegans.